We begin with the raw amino-acid sequence, 215 residues long: Peptidyl-tRNA hydrolase (215 aa).

Tyr35 contacts tRNA. The active-site Proton acceptor is the His40. TRNA contacts are provided by Tyr86, Asn88, and Asn134.

It belongs to the PTH family. In terms of assembly, monomer.

It localises to the cytoplasm. The enzyme catalyses an N-acyl-L-alpha-aminoacyl-tRNA + H2O = an N-acyl-L-amino acid + a tRNA + H(+). Functionally, hydrolyzes ribosome-free peptidyl-tRNAs (with 1 or more amino acids incorporated), which drop off the ribosome during protein synthesis, or as a result of ribosome stalling. In terms of biological role, catalyzes the release of premature peptidyl moieties from peptidyl-tRNA molecules trapped in stalled 50S ribosomal subunits, and thus maintains levels of free tRNAs and 50S ribosomes. The polypeptide is Peptidyl-tRNA hydrolase (Bordetella parapertussis (strain 12822 / ATCC BAA-587 / NCTC 13253)).